The following is a 198-amino-acid chain: Leucine-rich melanocyte differentiation-associated protein (198 aa).

LRR repeat units lie at residues 2 to 22 (EKYLSLSGNHSSNKRSLEGLS), 26 to 47 (SLEELILDNNQLGDDLVLPGLP), 48 to 69 (RLHTLTLNKNRITDLENLLDHL), and 75 to 95 (ALEYLSLLGNVACPNELVSLE). In terms of domain architecture, LRRCT spans 96–134 (KDEEDYKRYRCFVLYKLPNLKFLDAQKVTRQEREEALVR).

As to expression, in the embryo, expressed in melanoblasts. In the fetus, expressed in melanocytes. Not detected in retinal pigment epithelial cells.

In terms of biological role, required for melanocyte differentiation. The protein is Leucine-rich melanocyte differentiation-associated protein of Homo sapiens (Human).